Here is a 353-residue protein sequence, read N- to C-terminus: Outer membrane protein A (353 aa).

A signal peptide spans 1–21 (MKKTAIALAVALVGFATVAQA). 8 beta stranded membrane-spanning segments follow: residues 27–37 (TWYTGGKLGWS), 56–67 (QLGAGAFFGYQA), 71–79 (LGFEMGYDW), 97–108 (QGVQLAAKLSYP), 113–121 (LDVYTRLGG), 148–157 (PLVALGAEYA), 162–169 (WATRMEYQ), and 188–196 (LLSVGVSYR). 4 tandem repeats follow at residues 208–209 (AP), 210–211 (TP), 212–213 (AP), and 214–215 (AP). The 4 X 2 AA approximate tandem repeats of A-P stretch occupies residues 208-215 (APTPAPAP). Positions 217-345 (VDTKRFTLKS…RVEIEVKGYK (129 aa)) constitute an OmpA-like domain. C318 and C330 are joined by a disulfide.

The protein belongs to the outer membrane OOP (TC 1.B.6) superfamily. OmpA family. In terms of assembly, monomer and homodimer.

It localises to the cell outer membrane. With TolR probably plays a role in maintaining the position of the peptidoglycan cell wall in the periplasm. Acts as a porin with low permeability that allows slow penetration of small solutes; an internal gate slows down solute passage. In Yersinia pseudotuberculosis serotype I (strain IP32953), this protein is Outer membrane protein A.